A 436-amino-acid polypeptide reads, in one-letter code: Sulfopropanediol 3-dehydrogenase (436 aa).

The NAD(+) site is built by Tyr118, Gln180, and Asn203. Zn(2+) is bound by residues Gln248 and His251. Active-site proton acceptor residues include Glu318 and His319. 2 residues coordinate Zn(2+): Asp352 and His411.

This sequence belongs to the histidinol dehydrogenase family. HpsN subfamily. Zn(2+) serves as cofactor.

The enzyme catalyses (2R)-3-sulfopropanediol + 2 NAD(+) + H2O = (2R)-3-sulfolactate + 2 NADH + 3 H(+). Functionally, catalyzes the NAD-dependent oxidation of (R)-2,3-dihydroxypropane-1-sulfonate to (R)-3-sulfolactate. This is Sulfopropanediol 3-dehydrogenase from Cupriavidus pinatubonensis (strain JMP 134 / LMG 1197) (Cupriavidus necator (strain JMP 134)).